The chain runs to 149 residues: D-aminoacyl-tRNA deacylase (149 aa).

The Gly-cisPro motif, important for rejection of L-amino acids signature appears at 137–138 (GP).

The protein belongs to the DTD family. As to quaternary structure, homodimer.

It is found in the cytoplasm. The enzyme catalyses glycyl-tRNA(Ala) + H2O = tRNA(Ala) + glycine + H(+). It carries out the reaction a D-aminoacyl-tRNA + H2O = a tRNA + a D-alpha-amino acid + H(+). An aminoacyl-tRNA editing enzyme that deacylates mischarged D-aminoacyl-tRNAs. Also deacylates mischarged glycyl-tRNA(Ala), protecting cells against glycine mischarging by AlaRS. Acts via tRNA-based rather than protein-based catalysis; rejects L-amino acids rather than detecting D-amino acids in the active site. By recycling D-aminoacyl-tRNA to D-amino acids and free tRNA molecules, this enzyme counteracts the toxicity associated with the formation of D-aminoacyl-tRNA entities in vivo and helps enforce protein L-homochirality. This chain is D-aminoacyl-tRNA deacylase, found in Fervidobacterium nodosum (strain ATCC 35602 / DSM 5306 / Rt17-B1).